The sequence spans 249 residues: Hydroxyacylglutathione hydrolase (249 aa).

Residues histidine 54, histidine 56, aspartate 58, histidine 59, histidine 113, aspartate 138, and histidine 176 each coordinate Zn(2+).

Belongs to the metallo-beta-lactamase superfamily. Glyoxalase II family. Monomer. Requires Zn(2+) as cofactor.

The catalysed reaction is an S-(2-hydroxyacyl)glutathione + H2O = a 2-hydroxy carboxylate + glutathione + H(+). Its pathway is secondary metabolite metabolism; methylglyoxal degradation; (R)-lactate from methylglyoxal: step 2/2. Functionally, thiolesterase that catalyzes the hydrolysis of S-D-lactoyl-glutathione to form glutathione and D-lactic acid. This Parasynechococcus marenigrum (strain WH8102) protein is Hydroxyacylglutathione hydrolase.